A 502-amino-acid polypeptide reads, in one-letter code: MSQEKYIMAIDQGTTSSRAIIFNKKGEKVSSSQKEFTQIFPQAGWVEHNANEIWNSVQSVIAGAFIESGVKPNQIEAIGITNQRETTVVWDKKTGLPIYNAIVWQSRQTAPLAEQLKNQGYVEKFHEKTGLIIDAYFSATKVRWILDHVEGAQERAEKGELLFGTIDTWLVWKLTDGAAHVTDYSNAARTMLYNIKELKWDDEILEILNIPKAILPEVRSNSEIYGKTAPFHFYGGEVPISGMAGDQQAALFGQLAFEPGMVKNTYGTGSFIIMNTGEEMQLSENNLLTTIGYGINGKVYYALEGSIFIAGSAIQWLRDGLRMVENSPESEKYARDSHNNDEVYVVPAFTGLGAPYWNQNARGSVFGLTRGTSKEDFIKATLQSIAYQVRDIIDTMQVDTQTAIQVLKVDGGAAMNNFLMQFQADILGIDIARAKNLETTALGAAFLAGLSVGYWKDLDELKLLNETGELFEPSMNESRKEQLYKGWKKAVKATQVFAEVDD.

Residue Thr-14 coordinates ADP. Positions 14, 15, and 16 each coordinate ATP. Thr-14 provides a ligand contact to sn-glycerol 3-phosphate. Residue Arg-18 participates in ADP binding. The sn-glycerol 3-phosphate site is built by Arg-84, Glu-85, and Tyr-136. Residues Arg-84, Glu-85, and Tyr-136 each contribute to the glycerol site. At His-232 the chain carries Phosphohistidine; by HPr. Residue Asp-246 participates in sn-glycerol 3-phosphate binding. 2 residues coordinate glycerol: Asp-246 and Gln-247. ADP-binding residues include Thr-268 and Gly-311. ATP contacts are provided by Thr-268, Gly-311, Gln-315, and Gly-412. The ADP site is built by Gly-412 and Asn-416.

It belongs to the FGGY kinase family. As to quaternary structure, homotetramer and homodimer (in equilibrium). The phosphoenolpyruvate-dependent sugar phosphotransferase system (PTS), including enzyme I, and histidine-containing protein (HPr) are required for the phosphorylation, which leads to the activation of the enzyme.

It catalyses the reaction glycerol + ATP = sn-glycerol 3-phosphate + ADP + H(+). Its pathway is polyol metabolism; glycerol degradation via glycerol kinase pathway; sn-glycerol 3-phosphate from glycerol: step 1/1. With respect to regulation, activated by phosphorylation and inhibited by fructose 1,6-bisphosphate (FBP). In terms of biological role, key enzyme in the regulation of glycerol uptake and metabolism. Catalyzes the phosphorylation of glycerol to yield sn-glycerol 3-phosphate. This is Glycerol kinase from Streptococcus pneumoniae (strain ATCC 700669 / Spain 23F-1).